A 334-amino-acid polypeptide reads, in one-letter code: AT-hook motif nuclear-localized protein 2 (334 aa).

The segment covering 1–21 (METTGEVVKTTTGSDGGVTVV) has biased composition (low complexity). Disordered regions lie at residues 1–103 (METT…PTTS) and 109–128 (STTS…PSSF). Positions 44 to 54 (SVAPPPPPPPQ) are enriched in pro residues. Basic residues predominate over residues 71-80 (IKKRRGRPRK). Residues 72–80 (KKRRGRPRK) carry the Bipartite nuclear localization signal motif. Positions 72–84 (KKRRGRPRKYGHD) form a DNA-binding region, a.T hook. Residues 90-103 (LSPNPISSAAPTTS) are compositionally biased toward polar residues. Residues 147 to 287 (AANFTPHIIT…PHNHNFMSSP (141 aa)) form the PPC domain. Residues 306-319 (SSLPISTWTPSFPS) are compositionally biased toward polar residues. The segment at 306 to 334 (SSLPISTWTPSFPSDSRHKHSHDFNITLT) is disordered.

The protein localises to the nucleus. In terms of biological role, transcription factor that specifically binds AT-rich DNA sequences related to the nuclear matrix attachment regions (MARs). The protein is AT-hook motif nuclear-localized protein 2 of Arabidopsis thaliana (Mouse-ear cress).